Reading from the N-terminus, the 488-residue chain is Probable 26S proteasome non-ATPase regulatory subunit 3 (488 aa).

Residues 1–20 form a disordered region; it reads MTQDVEMKEQAAPPSNSLSS. Residues 240–421 form the PCI domain; the sequence is SRYLFYLGKI…GWMVSKETGD (182 aa). The tract at residues 452–488 is disordered; sequence FPPNSHKEKESAEKRRERQQQEQELAKHIAEEDDDDF. A compositionally biased stretch (basic and acidic residues) spans 456 to 481; it reads SHKEKESAEKRRERQQQEQELAKHIA.

The protein belongs to the proteasome subunit S3 family. As to quaternary structure, the 26S proteasome is composed of a core protease, known as the 20S proteasome, capped at one or both ends by the 19S regulatory complex (RC). The RC is composed of at least 18 different subunits in two subcomplexes, the base and the lid, which form the portions proximal and distal to the 20S proteolytic core, respectively.

It is found in the nucleus. Acts as a regulatory subunit of the 26 proteasome which is involved in the ATP-dependent degradation of ubiquitinated proteins. The polypeptide is Probable 26S proteasome non-ATPase regulatory subunit 3 (21D7) (Nicotiana tabacum (Common tobacco)).